Here is a 687-residue protein sequence, read N- to C-terminus: Glycine--tRNA ligase beta subunit (687 aa).

This sequence belongs to the class-II aminoacyl-tRNA synthetase family. In terms of assembly, tetramer of two alpha and two beta subunits.

The protein localises to the cytoplasm. The enzyme catalyses tRNA(Gly) + glycine + ATP = glycyl-tRNA(Gly) + AMP + diphosphate. This Neisseria gonorrhoeae (strain ATCC 700825 / FA 1090) protein is Glycine--tRNA ligase beta subunit.